The primary structure comprises 387 residues: Adaptive-response sensory kinase SasA (387 aa).

The interval 1-97 (MGESLSPQAL…TDQLANQLPQ (97 aa)) is interacts with KaiC. Residues 158–382 (LVAHDLRNPL…TFHFTMPVYR (225 aa)) enclose the Histidine kinase domain. H161 carries the phosphohistidine; by autocatalysis modification.

As to quaternary structure, homooligomerizes. Part of the circadian clock (KaiA, KaiB, KaiC, CikA, RpaA, SasA), the composition of which varies during the circadian cycle. Binds to the CI domain of KaiC; KaiB(fs) and SasA compete for the binding site. Binds preferentially to doubly phosphorylated KaiC. Interacts with LdpA. In terms of processing, autophosphorylates in vitro.

It catalyses the reaction ATP + protein L-histidine = ADP + protein N-phospho-L-histidine.. In terms of biological role, member of the two-component regulatory system SasA/RpaA involved in genome-wide circadian gene expression. One of three clock output pathways. Participates in the KaiABC clock protein complex, which constitutes the main circadian regulator in cyanobacteria, via its interaction with KaiC. Required for robustness of the circadian rhythm of gene expression and involved in clock output. KaiC enhances the autophosphorylation activity of SasA, which then transfers its phosphate group to RpaA to activate it. Phosphotransfer is maximal when KaiC phosphorylation is active during the circadian cycle; this two-component system is activated by fully phosphorylated KaiC. A very robust clock is reconstituted with KaiA, KaiB, KaiC, SasA, CikA and RpaA; output is measured by transcription from an appropriate reporter. In addition to its output function, recruits fold-shifted KaiB (KaiB(fs)) to KaiC to cooperatively form the KaiB(6):KaiC(6) complex (independent of SasA kinase activity); at physiological concentrations increases their association. At higher concentrations SasA and KaiB(fs) compete to bind to KaiC. Mutations that decrease cooperativity nearly phenocopy a deletion mutation. Functionally, autophosphorylation and phosphotransfer activities are not essential for clock rhythms in continuous light, but they are essential for adaptation to light/dark cycles. The protein is Adaptive-response sensory kinase SasA of Synechococcus elongatus (strain ATCC 33912 / PCC 7942 / FACHB-805) (Anacystis nidulans R2).